An 84-amino-acid chain; its full sequence is Small ribosomal subunit protein uS17 (84 aa).

Belongs to the universal ribosomal protein uS17 family. Part of the 30S ribosomal subunit.

In terms of biological role, one of the primary rRNA binding proteins, it binds specifically to the 5'-end of 16S ribosomal RNA. The polypeptide is Small ribosomal subunit protein uS17 (Legionella pneumophila (strain Paris)).